We begin with the raw amino-acid sequence, 1337 residues long: Protein HEG homolog 1 (1337 aa).

Positions 1–31 (MATPRAPRWPPPSLLLLLLLPLLLLPPAAPG) are cleaved as a signal peptide. Composition is skewed to low complexity over residues 28–40 (AAPG…PSPA) and 54–66 (PGAG…PGVA). Disordered stretches follow at residues 28-149 (AAPG…SNMA), 175-211 (SSLL…GFLE), 235-296 (ASHP…QNPS), 313-675 (VPRT…PSPI), 723-767 (LIPS…TVSL), and 860-909 (EGNR…PQTT). The Extracellular portion of the chain corresponds to 32–1204 (ARGSLPSPAH…GLNCGNPYQL (1173 aa)). A compositionally biased stretch (polar residues) spans 118 to 131 (TAQNARMSHSSSEG). Low complexity predominate over residues 175-190 (SSLLSLESLPESPSSS). Polar residues-rich tracts occupy residues 195-206 (RITPSQTESGTS), 247-258 (VLSQKRNSSGQE), 283-296 (IKNG…QNPS), and 340-361 (GITS…NSGL). Positions 470 to 480 (RGGGEDSGMGG) are enriched in gly residues. Low complexity-rich tracts occupy residues 486–502 (SSSS…LDSS) and 556–575 (SYSE…DSPS). Composition is skewed to polar residues over residues 576 to 585 (QAQPKQSSMS) and 592 to 617 (AQSS…NMPN). Over residues 637-675 (PSTQPSPSQPQPFSSALPSTRSPGSTSETTTSSPSPSPI) the composition is skewed to low complexity. 2 stretches are compositionally biased toward polar residues: residues 725-742 (PSNQ…QQEK) and 751-763 (SLVS…TKAV). A compositionally biased stretch (low complexity) spans 868–884 (PTTQPIPLTTSTTSAGE). Residues 885-896 (RTTELGRAEESS) are compositionally biased toward basic and acidic residues. Residues 897–909 (PSHFLTPSSPQTT) are compositionally biased toward polar residues. The region spanning 941-979 (PVNSCTVNPCLHDGKCIVDLTGRGYRCVCPPAWQGENCS) is the EGF-like 1 domain. 6 disulfide bridges follow: Cys-945/Cys-956, Cys-950/Cys-967, Cys-969/Cys-978, Cys-985/Cys-996, Cys-990/Cys-1005, and Cys-1007/Cys-1018. One can recognise an EGF-like 2; calcium-binding domain in the interval 981 to 1019 (DVNECLSSPCPPLATCNNTQGSFTCRCPVGYQLEKGICN). N-linked (GlcNAc...) asparagine glycosylation occurs at Asn-1093. A helical membrane pass occupies residues 1205-1225 (ITVVIAAAGGGLLLILGVALI). Residues 1226–1337 (VTCCRKSKND…SDESRRRDYF (112 aa)) are Cytoplasmic-facing. Ser-1315 bears the Phosphoserine mark.

As to quaternary structure, interacts with CCM2 and KRIT1; KRIT1 markedly facilitates interaction with CCM2.

It localises to the cell membrane. Its subcellular location is the cell junction. In terms of biological role, receptor component of the CCM signaling pathway which is a crucial regulator of heart and vessel formation and integrity. May be acting by stabilizing endothelial cell junctions. The protein is Protein HEG homolog 1 (Heg1) of Mus musculus (Mouse).